The following is a 536-amino-acid chain: Bifunctional purine biosynthesis protein PurH (536 aa).

In terms of domain architecture, MGS-like spans 8-158; it reads IPAPDEVRIK…KNHAYVTVVT (151 aa).

This sequence belongs to the PurH family.

The enzyme catalyses (6R)-10-formyltetrahydrofolate + 5-amino-1-(5-phospho-beta-D-ribosyl)imidazole-4-carboxamide = 5-formamido-1-(5-phospho-D-ribosyl)imidazole-4-carboxamide + (6S)-5,6,7,8-tetrahydrofolate. It carries out the reaction IMP + H2O = 5-formamido-1-(5-phospho-D-ribosyl)imidazole-4-carboxamide. The protein operates within purine metabolism; IMP biosynthesis via de novo pathway; 5-formamido-1-(5-phospho-D-ribosyl)imidazole-4-carboxamide from 5-amino-1-(5-phospho-D-ribosyl)imidazole-4-carboxamide (10-formyl THF route): step 1/1. Its pathway is purine metabolism; IMP biosynthesis via de novo pathway; IMP from 5-formamido-1-(5-phospho-D-ribosyl)imidazole-4-carboxamide: step 1/1. This chain is Bifunctional purine biosynthesis protein PurH, found in Sinorhizobium medicae (strain WSM419) (Ensifer medicae).